A 292-amino-acid chain; its full sequence is Zinc finger protein OZF (292 aa).

10 C2H2-type zinc fingers span residues 16-38 (FACK…EHFH), 44-66 (FECN…QSTH), 72-94 (FECS…QKIH), 100-122 (FECK…QRTH), 128-150 (FICK…EKIH), 156-178 (FKCN…QNIH), 184-206 (YECN…VRIH), 212-234 (YECN…VRSH), 240-262 (YGCN…LRIH), and 268-290 (YQCS…QKIH). Glycyl lysine isopeptide (Lys-Gly) (interchain with G-Cter in SUMO2) cross-links involve residues K28, K51, and K56. Glycyl lysine isopeptide (Lys-Gly) (interchain with G-Cter in SUMO) cross-links involve residues K157 and K169. Residue K173 forms a Glycyl lysine isopeptide (Lys-Gly) (interchain with G-Cter in SUMO2) linkage. The segment at 212-292 (YECNVCGKAF…HIRHQKIHTH (81 aa)) is interaction with TERF2IP.

This sequence belongs to the krueppel C2H2-type zinc-finger protein family. As to quaternary structure, binds DNA. Interacts with SUMO conjugating enzyme UBC9/UBE2I. Interacts with the telomeric protein TERF2IP. As to expression, expressed in heart, brain, liver, lung, skeletal muscle and kidney, and at much lower level in spleen and testicle. Expressed in lactating mammary gland.

Its subcellular location is the nucleus. The sequence is that of Zinc finger protein OZF (Znf146) from Mus musculus (Mouse).